The following is an 86-amino-acid chain: Acyl-CoA-binding protein homolog (86 aa).

The ACB domain maps to 2–86; the sequence is VSEQFNAAAE…FVEGLVAKYA (85 aa). Residues Lys14, 29-33, Lys51, Lys55, and Tyr74 each bind an acyl-CoA; that span reads YALFK.

Belongs to the ACBP family. Expressed in larval and pupal brains. In adults, expressed in cardia, part of the Malpighian tubules, fat body, and gametes of both sexes.

Its function is as follows. Binds medium- and long-chain acyl-CoA esters with very high affinity and may function as an intracellular carrier of acyl-CoA esters. May be involved in energy metabolism in a manner that depends on the substrate used for energy production. Dbi and its metabolites are involved in the regulation of multiple biological processes. This chain is Acyl-CoA-binding protein homolog, found in Drosophila melanogaster (Fruit fly).